We begin with the raw amino-acid sequence, 239 residues long: 1-(5-phosphoribosyl)-5-[(5-phosphoribosylamino)methylideneamino] imidazole-4-carboxamide isomerase (239 aa).

The active-site Proton acceptor is the aspartate 9. Residue aspartate 131 is the Proton donor of the active site.

This sequence belongs to the HisA/HisF family.

The protein resides in the cytoplasm. It catalyses the reaction 1-(5-phospho-beta-D-ribosyl)-5-[(5-phospho-beta-D-ribosylamino)methylideneamino]imidazole-4-carboxamide = 5-[(5-phospho-1-deoxy-D-ribulos-1-ylimino)methylamino]-1-(5-phospho-beta-D-ribosyl)imidazole-4-carboxamide. It participates in amino-acid biosynthesis; L-histidine biosynthesis; L-histidine from 5-phospho-alpha-D-ribose 1-diphosphate: step 4/9. This is 1-(5-phosphoribosyl)-5-[(5-phosphoribosylamino)methylideneamino] imidazole-4-carboxamide isomerase from Bacteroides fragilis (strain ATCC 25285 / DSM 2151 / CCUG 4856 / JCM 11019 / LMG 10263 / NCTC 9343 / Onslow / VPI 2553 / EN-2).